An 86-amino-acid polypeptide reads, in one-letter code: MTTEVTQVTVEELATLMKKAAGVTVDPRDLERRANGFADFGLDSLGLLGIVGELENRYARALHRRGTCKSPRAFLDVVNGALASGA.

Residues 7–86 (QVTVEELATL…VVNGALASGA (80 aa)) enclose the Carrier domain. Residue Ser44 is modified to O-(pantetheine 4'-phosphoryl)serine.

In terms of processing, 4'-phosphopantetheine is transferred from CoA to a specific serine of the apo-ACP-like protein.

It functions in the pathway antibiotic biosynthesis; curamycin biosynthesis. Its function is as follows. Acyl carrier protein. This Streptomyces cyaneus (Streptomyces curacoi) protein is Curamycin polyketide synthase acyl carrier protein (curE).